We begin with the raw amino-acid sequence, 329 residues long: MLQLRSPPPATSSPSSAVSFPTLAPRLLPLRRRRRGAGSQLGGKTSSAVRASSAAAPGATEPEVMVEVAHREVARALASLAEARLGARLLPSAVPPDVAEFRSGGGAGNAVGSLDVRRGAPGSTIDFMLQSSLHCKVPNGAIDITSLLIFLNASTDAPHFLMEFIQGSPTSIVVLLDLLPRKDLALHPEYIERYYENTQVDKQREKVEELPQARPYRSRSLFVRSTFSLTAILMSIDCGQGGEGTLEEIVRGQLATAARALLQIWLDSCADHTSEMEEGERENMIKRDQIVRSKSIEVDLTSNLPRMFGPDVADRVIAEIQKAFGVQEA.

The segment covering 1 to 11 has biased composition (pro residues); sequence MLQLRSPPPAT. The N-terminal 50 residues, 1-50, are a transit peptide targeting the chloroplast; sequence MLQLRSPPPATSSPSSAVSFPTLAPRLLPLRRRRRGAGSQLGGKTSSAVR. The tract at residues 1-61 is disordered; that stretch reads MLQLRSPPPA…SSAAAPGATE (61 aa). 2 stretches are compositionally biased toward low complexity: residues 12–28 and 46–59; these read SSPS…PRLL and SSAV…APGA. Red chlorophyll catabolite-binding positions include E163, 216–218, and D299; that span reads YRS.

In terms of tissue distribution, expressed in leaves. Expressed at low levels in roots, stems, panicles and seeds.

The protein resides in the plastid. Its subcellular location is the chloroplast. It carries out the reaction primary fluorescent chlorophyll catabolite + 2 oxidized [2Fe-2S]-[ferredoxin] = red chlorophyll catabolite + 2 reduced [2Fe-2S]-[ferredoxin] + 3 H(+). It functions in the pathway porphyrin-containing compound metabolism; chlorophyll degradation. Catalyzes the key reaction of chlorophyll catabolism, porphyrin macrocycle cleavage of pheophorbide a (pheide a) to a primary fluorescent catabolite (pFCC). Works in a two-step reaction with pheophorbide a oxygenase (PaO) by reducing the C20/C1 double bond of the intermediate, RCC. Belongs to the chlorophyll catabolic enzymes (CCEs). May play a role in senescence and response to wounding. In Oryza sativa subsp. japonica (Rice), this protein is Red chlorophyll catabolite reductase 1, chloroplastic.